The primary structure comprises 368 residues: UDP-N-acetylglucosamine--N-acetylmuramyl-(pentapeptide) pyrophosphoryl-undecaprenol N-acetylglucosamine transferase (368 aa).

UDP-N-acetyl-alpha-D-glucosamine-binding positions include 13–15 (TGG), Asn-124, Arg-167, Ser-195, and Gln-296.

Belongs to the glycosyltransferase 28 family. MurG subfamily.

The protein resides in the cell inner membrane. It catalyses the reaction di-trans,octa-cis-undecaprenyl diphospho-N-acetyl-alpha-D-muramoyl-L-alanyl-D-glutamyl-meso-2,6-diaminopimeloyl-D-alanyl-D-alanine + UDP-N-acetyl-alpha-D-glucosamine = di-trans,octa-cis-undecaprenyl diphospho-[N-acetyl-alpha-D-glucosaminyl-(1-&gt;4)]-N-acetyl-alpha-D-muramoyl-L-alanyl-D-glutamyl-meso-2,6-diaminopimeloyl-D-alanyl-D-alanine + UDP + H(+). The protein operates within cell wall biogenesis; peptidoglycan biosynthesis. Functionally, cell wall formation. Catalyzes the transfer of a GlcNAc subunit on undecaprenyl-pyrophosphoryl-MurNAc-pentapeptide (lipid intermediate I) to form undecaprenyl-pyrophosphoryl-MurNAc-(pentapeptide)GlcNAc (lipid intermediate II). The sequence is that of UDP-N-acetylglucosamine--N-acetylmuramyl-(pentapeptide) pyrophosphoryl-undecaprenol N-acetylglucosamine transferase from Maricaulis maris (strain MCS10) (Caulobacter maris).